The chain runs to 133 residues: Exonuclease VapC9 (133 aa).

One can recognise a PINc domain in the interval 5-113; that stretch reads YLVDASALYA…LVLVTQDREL (109 aa). Asp-8, Asp-92, and Asp-110 together coordinate Mg(2+).

Belongs to the PINc/VapC protein family. In terms of assembly, homodimer, 2 of which then form a homotetramer. It depends on Mg(2+) as a cofactor.

With respect to regulation, inhibited by EDTA. In terms of biological role, toxic component of a type II toxin-antitoxin (TA) system. Functionally, has ribonuclease activity. Has a slow ssDNA exonuclease activity. This chain is Exonuclease VapC9, found in Pyrobaculum aerophilum (strain ATCC 51768 / DSM 7523 / JCM 9630 / CIP 104966 / NBRC 100827 / IM2).